A 242-amino-acid chain; its full sequence is MILYPAIDLKEGHCVRLLQGDMQKATIFNDDPAAQAAAFEAQGFTALHVVDLDGAFAGKPMNAAAVDAILARVKMSVQLGGGIRDEATIEAWLGKGIARVIIGTAAVRDPDLVRRAAARFPGKIAVGIDAKDGFVAVEGWAKTAQLSAVELGKKFEDAGVAALIYTDIARDGGLTGLNIDATLALAKAVHIPVIASGGLASLADIERLTAPDCAILAGAISGRALYDGRIDPAKALALLRKD.

Asp8 functions as the Proton acceptor in the catalytic mechanism. The active-site Proton donor is Asp129.

The protein belongs to the HisA/HisF family.

The protein localises to the cytoplasm. The enzyme catalyses 1-(5-phospho-beta-D-ribosyl)-5-[(5-phospho-beta-D-ribosylamino)methylideneamino]imidazole-4-carboxamide = 5-[(5-phospho-1-deoxy-D-ribulos-1-ylimino)methylamino]-1-(5-phospho-beta-D-ribosyl)imidazole-4-carboxamide. Its pathway is amino-acid biosynthesis; L-histidine biosynthesis; L-histidine from 5-phospho-alpha-D-ribose 1-diphosphate: step 4/9. The sequence is that of 1-(5-phosphoribosyl)-5-[(5-phosphoribosylamino)methylideneamino] imidazole-4-carboxamide isomerase from Beijerinckia indica subsp. indica (strain ATCC 9039 / DSM 1715 / NCIMB 8712).